The sequence spans 548 residues: Druantia protein DruB (548 aa).

The protein resides in the cytoplasm. In terms of biological role, component of antiviral defense system Druantia type I, composed of DruA, DruB, DruC, DruD and DruE. Expression of Druantia in E.coli (strain MG1655) confers resistance to phage lambda, SECphi18, SECphi27 and T4. This chain is Druantia protein DruB, found in Escherichia coli (strain UMEA 4076-1).